A 226-amino-acid chain; its full sequence is Endonuclease V (226 aa).

The Mg(2+) site is built by D43 and D108.

Belongs to the endonuclease V family. Mg(2+) is required as a cofactor.

It localises to the cytoplasm. It catalyses the reaction Endonucleolytic cleavage at apurinic or apyrimidinic sites to products with a 5'-phosphate.. Its function is as follows. DNA repair enzyme involved in the repair of deaminated bases. Selectively cleaves double-stranded DNA at the second phosphodiester bond 3' to a deoxyinosine leaving behind the intact lesion on the nicked DNA. This Thermosipho melanesiensis (strain DSM 12029 / CIP 104789 / BI429) protein is Endonuclease V.